The following is a 201-amino-acid chain: Probable GTP-binding protein EngB (201 aa).

The 176-residue stretch at 22–197 (RLPEYAFIGR…LDYIDSINQE (176 aa)) folds into the EngB-type G domain. GTP is bound by residues 30–37 (GRSNVGKS), 57–61 (GKTQL), 75–78 (DLPG), 142–145 (TKAD), and 173–178 (VFITSS). Residues Ser37 and Thr59 each contribute to the Mg(2+) site.

It belongs to the TRAFAC class TrmE-Era-EngA-EngB-Septin-like GTPase superfamily. EngB GTPase family. Requires Mg(2+) as cofactor.

Functionally, necessary for normal cell division and for the maintenance of normal septation. The protein is Probable GTP-binding protein EngB of Porphyromonas gingivalis (strain ATCC 33277 / DSM 20709 / CIP 103683 / JCM 12257 / NCTC 11834 / 2561).